A 101-amino-acid polypeptide reads, in one-letter code: Small ribosomal subunit protein bS18c (101 aa).

The protein belongs to the bacterial ribosomal protein bS18 family. Part of the 30S ribosomal subunit.

The protein resides in the plastid. It localises to the chloroplast. The chain is Small ribosomal subunit protein bS18c from Morus indica (Mulberry).